Reading from the N-terminus, the 113-residue chain is Hydrogenase maturation factor HypA (113 aa).

H2 is a Ni(2+) binding site. Residues C70, C73, C86, and C88 each contribute to the Zn(2+) site.

The protein belongs to the HypA/HybF family.

Its function is as follows. Involved in the maturation of [NiFe] hydrogenases. Required for nickel insertion into the metal center of the hydrogenase. The sequence is that of Hydrogenase maturation factor HypA from Nostoc sp. (strain PCC 7120 / SAG 25.82 / UTEX 2576).